A 540-amino-acid chain; its full sequence is tRNA-2-methylthio-N(6)-dimethylallyladenosine synthase (540 aa).

Residues 41–157 (RTYEVRTFGC…LPTLLERSAH (117 aa)) enclose the MTTase N-terminal domain. Cys-50, Cys-86, Cys-120, Cys-194, Cys-198, and Cys-201 together coordinate [4Fe-4S] cluster. The Radical SAM core domain occupies 180-416 (RESAYSGWVS…IALQERIQAE (237 aa)). Positions 419–486 (KELVGTTQEL…PFFLIADGPL (68 aa)) constitute a TRAM domain.

It belongs to the methylthiotransferase family. MiaB subfamily. As to quaternary structure, monomer. [4Fe-4S] cluster serves as cofactor.

The protein localises to the cytoplasm. The catalysed reaction is N(6)-dimethylallyladenosine(37) in tRNA + (sulfur carrier)-SH + AH2 + 2 S-adenosyl-L-methionine = 2-methylsulfanyl-N(6)-dimethylallyladenosine(37) in tRNA + (sulfur carrier)-H + 5'-deoxyadenosine + L-methionine + A + S-adenosyl-L-homocysteine + 2 H(+). Catalyzes the methylthiolation of N6-(dimethylallyl)adenosine (i(6)A), leading to the formation of 2-methylthio-N6-(dimethylallyl)adenosine (ms(2)i(6)A) at position 37 in tRNAs that read codons beginning with uridine. This Corynebacterium urealyticum (strain ATCC 43042 / DSM 7109) protein is tRNA-2-methylthio-N(6)-dimethylallyladenosine synthase.